The primary structure comprises 383 residues: Pleckstrin homology domain-containing family A member 1 (383 aa).

2 consecutive PH domains span residues Gln7–Lys112 and Ala191–Val289. Val284 carries the phosphoserine modification. Positions Leu362 to Lys383 are disordered. The segment covering Ser370–Lys383 has biased composition (low complexity).

As to quaternary structure, interacts with MPDZ and PTPN13.

The protein resides in the cytoplasm. The protein localises to the cell membrane. It is found in the nucleus. In terms of biological role, binds specifically to phosphatidylinositol 3,4-diphosphate (PtdIns3,4P2), but not to other phosphoinositides. May recruit other proteins to the plasma membrane. The sequence is that of Pleckstrin homology domain-containing family A member 1 (Plekha1) from Mus musculus (Mouse).